A 414-amino-acid chain; its full sequence is Serine hydroxymethyltransferase (414 aa).

(6S)-5,6,7,8-tetrahydrofolate contacts are provided by residues L116 and 120–122 (GHL). K224 is modified (N6-(pyridoxal phosphate)lysine). (6S)-5,6,7,8-tetrahydrofolate is bound by residues E240 and 348–350 (SPF).

It belongs to the SHMT family. Homodimer. The cofactor is pyridoxal 5'-phosphate.

It localises to the cytoplasm. The catalysed reaction is (6R)-5,10-methylene-5,6,7,8-tetrahydrofolate + glycine + H2O = (6S)-5,6,7,8-tetrahydrofolate + L-serine. It functions in the pathway one-carbon metabolism; tetrahydrofolate interconversion. Its pathway is amino-acid biosynthesis; glycine biosynthesis; glycine from L-serine: step 1/1. Its function is as follows. Catalyzes the reversible interconversion of serine and glycine with tetrahydrofolate (THF) serving as the one-carbon carrier. This reaction serves as the major source of one-carbon groups required for the biosynthesis of purines, thymidylate, methionine, and other important biomolecules. Also exhibits THF-independent aldolase activity toward beta-hydroxyamino acids, producing glycine and aldehydes, via a retro-aldol mechanism. This is Serine hydroxymethyltransferase from Campylobacter jejuni (strain RM1221).